The sequence spans 429 residues: L-threonine dehydratase biosynthetic IlvA (429 aa).

Lysine 66 carries the N6-(pyridoxal phosphate)lysine modification. Pyridoxal 5'-phosphate is bound by residues asparagine 93, 196–200 (GGGGC), and serine 322. In terms of domain architecture, ACT-like spans 346 to 420 (HYFLVDFPQE…TDIHVEALEP (75 aa)).

The protein belongs to the serine/threonine dehydratase family. In terms of assembly, homotetramer. Pyridoxal 5'-phosphate serves as cofactor.

It carries out the reaction L-threonine = 2-oxobutanoate + NH4(+). It participates in amino-acid biosynthesis; L-isoleucine biosynthesis; 2-oxobutanoate from L-threonine: step 1/1. Functionally, catalyzes the anaerobic formation of alpha-ketobutyrate and ammonia from threonine in a two-step reaction. The first step involved a dehydration of threonine and a production of enamine intermediates (aminocrotonate), which tautomerizes to its imine form (iminobutyrate). Both intermediates are unstable and short-lived. The second step is the nonenzymatic hydrolysis of the enamine/imine intermediates to form 2-ketobutyrate and free ammonia. In the low water environment of the cell, the second step is accelerated by RidA. The polypeptide is L-threonine dehydratase biosynthetic IlvA (ilvA) (Mycobacterium bovis (strain ATCC BAA-935 / AF2122/97)).